The following is a 452-amino-acid chain: Phenylalanine-4-hydroxylase (452 aa).

Position 16 is a phosphoserine; by PKA (Ser-16). The region spanning 36–114 (SLIFSLKEEV…TVHELSRDKK (79 aa)) is the ACT domain. His-285, His-290, and Glu-330 together coordinate Fe cation.

It belongs to the biopterin-dependent aromatic amino acid hydroxylase family. In terms of assembly, homodimer and homotetramer. Fe(2+) is required as a cofactor. Post-translationally, phosphorylation at Ser-16 increases basal activity and facilitates activation by the substrate phenylalanine.

It carries out the reaction (6R)-L-erythro-5,6,7,8-tetrahydrobiopterin + L-phenylalanine + O2 = (4aS,6R)-4a-hydroxy-L-erythro-5,6,7,8-tetrahydrobiopterin + L-tyrosine. It participates in amino-acid degradation; L-phenylalanine degradation; acetoacetate and fumarate from L-phenylalanine: step 1/6. With respect to regulation, N-terminal region of PAH is thought to contain allosteric binding sites for phenylalanine and to constitute an 'inhibitory' domain that regulates the activity of a catalytic domain in the C-terminal portion of the molecule. Its function is as follows. Catalyzes the hydroxylation of L-phenylalanine to L-tyrosine. In Homo sapiens (Human), this protein is Phenylalanine-4-hydroxylase (PAH).